The following is a 232-amino-acid chain: Sugar fermentation stimulation protein homolog (232 aa).

Belongs to the SfsA family.

In Alkaliphilus metalliredigens (strain QYMF), this protein is Sugar fermentation stimulation protein homolog.